A 408-amino-acid polypeptide reads, in one-letter code: Multidrug resistance protein MdtG (408 aa).

The next 11 membrane-spanning stretches (helical) occupy residues 16–36, 58–78, 92–112, 115–135, 146–166, 173–193, 224–244, 253–273, 290–310, 319–339, and 378–398; these read LIVAWLGCFLTGAAFSLVMPF, IVFSITFLFSAIASPFWGGLA, LGMGIVMILMGMAQNIWQFLI, ALLGLLGGFVPNANALIATQV, TLSTGGVSGALLGPLAGGLLA, PVFFITASVLMLCFVVTLLCI, LFVTTMIIQIASGSIAPILTL, VGNIAFISGMIASVPGVAALL, ILIAALIFSVLLLIPMSFVQT, FLLGAADGALLPAVQTLLVYN, and AVFLVTACVVLFNIIYSWNSL.

The protein belongs to the major facilitator superfamily. DHA1 family. MdtG (TC 2.A.1.2.20) subfamily.

Its subcellular location is the cell inner membrane. Its function is as follows. Confers resistance to fosfomycin and deoxycholate. This chain is Multidrug resistance protein MdtG, found in Escherichia fergusonii (strain ATCC 35469 / DSM 13698 / CCUG 18766 / IAM 14443 / JCM 21226 / LMG 7866 / NBRC 102419 / NCTC 12128 / CDC 0568-73).